We begin with the raw amino-acid sequence, 478 residues long: Patatin-like phospholipase domain-containing protein 2 (478 aa).

Topologically, residues 1 to 8 (MFPRETKW) are cytoplasmic. A helical membrane pass occupies residues 9-29 (NISFAGCGFLGVYHIGVASCL). The region spanning 10-179 (ISFAGCGFLG…SDNLPLYELK (170 aa)) is the PNPLA domain. The GXGXXG signature appears at 14-19 (GCGFLG). Topologically, residues 30 to 42 (REHAPFLVANATH) are extracellular. A glycan (N-linked (GlcNAc...) asparagine) is linked at asparagine 39. Residues 43-63 (IYGASAGALTATALVTGACLG) traverse the membrane as a helical segment. Residues 45–49 (GASAG) carry the GXSXG motif. The active-site Nucleophile is serine 47. Topologically, residues 64-137 (EAGANIIEVS…IISHFSSKDE (74 aa)) are cytoplasmic. Residue lysine 92 forms a Glycyl lysine isopeptide (Lys-Gly) (interchain with G-Cter in ubiquitin) linkage. The helical transmembrane segment at 138-158 (LIQANVCSTFIPVYCGLIPPT) threads the bilayer. The Extracellular segment spans residues 159-323 (LQGVRYVDGG…TTLSNMLPVR (165 aa)). Aspartate 166 serves as the catalytic Proton acceptor. Residues 166-168 (DGG) carry the DGA/G motif. Residues 324–344 (LATAMMVPYTLPLESAVSFTI) traverse the membrane as a helical segment. Topologically, residues 345 to 478 (RLLEWLPDVP…PQDPSGLPPC (134 aa)) are cytoplasmic. Serine 366 carries the phosphoserine; in vitro modification. At serine 388 the chain carries Phosphoserine; by PKA. Residues serine 398 and serine 422 each carry the phosphoserine modification. The disordered stretch occupies residues 456–478 (RAPASPTATDPATPQDPSGLPPC). Over residues 457 to 478 (APASPTATDPATPQDPSGLPPC) the composition is skewed to low complexity. Serine 460 carries the post-translational modification Phosphoserine; in vitro.

As to quaternary structure, interacts with ABHD5; this association stimulates PNPLA2 triglyceride hydrolase activity. Interacts with SERPINF1; this interaction stimulates the phospholipase A2 activity of PNPLA2. Despite a colocalization in lipid droplets, it probably does not interact with PLIN. Interacts with PLIN5; prevents interaction with ABHD5. Interacts with FAF2. Phosphorylation at Ser-398 by PKA is increased during fasting and moderate intensity exercise, and moderately increases lipolytic activity. Post-translationally, ubiquitinated by PEX2 in response to reactive oxygen species (ROS), leading to its degradation. Ubiquitination is stimulated by LDAH.

The protein resides in the lipid droplet. It localises to the cell membrane. It is found in the cytoplasm. The enzyme catalyses a triacylglycerol + H2O = a diacylglycerol + a fatty acid + H(+). The catalysed reaction is a triacylglycerol + H2O = a 1,2-diacylglycerol + a fatty acid + H(+). It carries out the reaction a triacylglycerol + H2O = a 1,3-diacylglycerol + a fatty acid + H(+). It catalyses the reaction a triacyl-sn-glycerol + H2O = a 1,3-diacyl-sn-glycerol + a fatty acid + H(+). The enzyme catalyses a triacyl-sn-glycerol + H2O = a 2,3-diacyl-sn-glycerol + a fatty acid + H(+). The catalysed reaction is a 1-acylglycerol + a 1,3-diacylglycerol = a triacylglycerol + glycerol. It carries out the reaction a 1-acylglycerol + a 1,2-diacylglycerol = a triacylglycerol + glycerol. It catalyses the reaction 2 a 1-acylglycerol = a 1,2-diacylglycerol + glycerol. The enzyme catalyses a triacylglycerol + all-trans-retinol = an all-trans-retinyl ester + a diacylglycerol. The catalysed reaction is 1,2-di-(9Z-octadecenoyl)-glycerol + (9Z)-octadecenoate + H(+) = 1,2,3-tri-(9Z-octadecenoyl)-glycerol + H2O. It carries out the reaction 1,2,3-tri-(9Z-octadecenoyl)-glycerol + H2O = 1,3-di-(9Z-octadecenoyl)-glycerol + (9Z)-octadecenoate + H(+). It catalyses the reaction 1-(9Z-octadecenoyl)-glycerol + 1,3-di-(9Z-octadecenoyl)-glycerol = 1,2,3-tri-(9Z-octadecenoyl)-glycerol + glycerol. The enzyme catalyses 1-(9Z-octadecenoyl)-glycerol + 1,2-di-(9Z-octadecenoyl)-glycerol = 1,2,3-tri-(9Z-octadecenoyl)-glycerol + glycerol. The catalysed reaction is 2 1-(9Z-octadecenoyl)-glycerol = 1,2-di-(9Z-octadecenoyl)-glycerol + glycerol. It carries out the reaction 1,2,3-tri-(9Z-octadecenoyl)-glycerol + all-trans-retinol = all-trans-retinyl 9Z-octadecenoate + di-(9Z)-octadecenoylglycerol. It catalyses the reaction 1,2,3-tri-(9Z)-hexadecenoylglycerol + H2O = 1,3-di-(9Z)-hexadecenoylglycerol + (9Z)-hexadecenoate + H(+). The enzyme catalyses 1,2,3-tri-(9Z,12Z)-octadecadienoylglycerol + H2O = 1,3-di-(9Z,12Z)-octadecadienoylglycerol + (9Z,12Z)-octadecadienoate + H(+). The catalysed reaction is 1,2,3-tri-(9Z,12Z,15Z)-octadecatrienoylglycerol + H2O = 1,3-di-(9Z,12Z,15Z)-octadecatrienoylglycerol + (9Z,12Z,15Z)-octadecatrienoate + H(+). It carries out the reaction 1,3-di-(9Z)-octadecenoyl-2-hexadecanoylglycerol + H2O = 1,3-di-(9Z-octadecenoyl)-glycerol + hexadecanoate + H(+). It catalyses the reaction 1,2-di-(9Z)-octadecenoyl-3-hexadecanoyl-sn-glycerol + H2O = 1-(9Z)-octadecenoyl-3-hexadecanoyl-sn-glycerol + (9Z)-octadecenoate + H(+). The enzyme catalyses 1-hexadecanoyl-2,3-di-(9Z)-octadecenoyl-sn-glycerol + H2O = 1-hexadecanoyl-3-(9Z)-octadecenoyl-sn-glycerol + (9Z)-octadecenoate + H(+). The catalysed reaction is 1,2,3-tri-(9Z-octadecenoyl)-glycerol + H2O = 2,3-di-(9Z)-octadecenoyl-sn-glycerol + (9Z)-octadecenoate + H(+). It carries out the reaction 1,2,3-tri-(9Z)-hexadecenoylglycerol + H2O = 2,3-di-(9Z)-hexadecenoyl-sn-glycerol + (9Z)-hexadecenoate + H(+). It catalyses the reaction 1,2,3-tri-(9Z,12Z)-octadecadienoylglycerol + H2O = 2,3-di-(9Z,12Z)-octadecadienoyl-sn-glycerol + (9Z,12Z)-octadecadienoate + H(+). The enzyme catalyses 1,2,3-tri-(9Z,12Z,15Z)-octadecatrienoylglycerol + H2O = 2,3-di-(9Z,12Z,15Z)-octadecatrienoyl-sn-glycerol + (9Z,12Z,15Z)-octadecatrienoate + H(+). The catalysed reaction is 1,3-di-(9Z)-octadecenoyl-2-hexadecanoylglycerol + H2O = 2-hexadecanoyl-3-(9Z)-octadecenoyl-sn-glycerol + (9Z)-octadecenoate + H(+). It carries out the reaction 1-hexadecanoyl-2,3-di-(9Z)-octadecenoyl-sn-glycerol + H2O = 2,3-di-(9Z)-octadecenoyl-sn-glycerol + hexadecanoate + H(+). It catalyses the reaction 1,2-di-(9Z)-octadecenoyl-3-hexadecanoyl-sn-glycerol + H2O = 2-(9Z-octadecenoyl)-3-hexadecanoyl-sn-glycerol + (9Z)-octadecenoate + H(+). The enzyme catalyses a 1,2-diacyl-sn-glycero-3-phosphocholine + H2O = a 1-acyl-sn-glycero-3-phosphocholine + a fatty acid + H(+). The catalysed reaction is 1,2,3-tri-(9Z-octadecenoyl)-glycerol + 9-hydroxy-octadecanoate = 9-(9Z-octadecenoyloxy)-octadecanoate + 2,3-di-(9Z)-octadecenoyl-sn-glycerol. It carries out the reaction 1-hexadecanoyl-2,3-di-(9Z)-octadecenoyl-sn-glycerol + 9-hydroxy-octadecanoate = 9-hexadecanoyloxy-octadecanoate + 2,3-di-(9Z)-octadecenoyl-sn-glycerol. It catalyses the reaction 1,2,3-tri-(10Z)-heptadecenoylglycerol + 9-hydroxy-octadecanoate = 2,3-di-(10Z-heptadecenoyl)-sn-glycerol + 9-(10Z-heptadecenoyloxy)-octadecanoate. The enzyme catalyses 1,2,3-tri-(9Z,12Z)-octadecadienoylglycerol + 9-hydroxy-octadecanoate = 2,3-di-(9Z,12Z)-octadecadienoyl-sn-glycerol + 9-(9Z,12Z-octadecadienoyloxy)-octadecanoate. The catalysed reaction is 1,2,3-tri-(9Z)-hexadecenoylglycerol + 9-hydroxy-octadecanoate = 2,3-di-(9Z)-hexadecenoyl-sn-glycerol + 9-(9Z-hexadecenoyloxy)-octadecanoate. It carries out the reaction 9-hydroxy-octadecanoate + 1,2-di-(9Z-octadecenoyl)-sn-glycerol = 9-(9Z-octadecenoyloxy)-octadecanoate + 2-(9Z-octadecenoyl)-glycerol. It catalyses the reaction 1-hexadecanoyl-2,3-di-(9Z)-octadecenoyl-sn-glycerol + 9-hydroxy-octadecanoate = 1-hexadecanoyl-3-(9Z)-octadecenoyl-sn-glycerol + 9-(9Z-octadecenoyloxy)-octadecanoate. The protein operates within glycerolipid metabolism; triacylglycerol degradation. Catalyzes the initial step in triglyceride hydrolysis in adipocyte and non-adipocyte lipid droplets. Exhibits a strong preference for the hydrolysis of long-chain fatty acid esters at the sn-2 position of the glycerol backbone and acts coordinately with LIPE/HLS and DGAT2 within the lipolytic cascade. Also possesses acylglycerol transacylase and phospholipase A2 activities. Transfers fatty acid from triglyceride to retinol, hydrolyzes retinylesters, and generates 1,3-diacylglycerol from triglycerides. Regulates adiposome size and may be involved in the degradation of adiposomes. Catalyzes the formation of an ester bond between hydroxy fatty acids and fatty acids derived from triglycerides or diglycerides to generate fatty acid esters of hydroxy fatty acids (FAHFAs) in adipocytes. Acts antagonistically with LDAH in regulation of cellular lipid stores. Inhibits LDAH-stimulated lipid droplet fusion. May play an important role in energy homeostasis. May play a role in the response of the organism to starvation, enhancing hydrolysis of triglycerides and providing free fatty acids to other tissues to be oxidized in situations of energy depletion. The protein is Patatin-like phospholipase domain-containing protein 2 of Rattus norvegicus (Rat).